The primary structure comprises 444 residues: MAAKQNRISEALSSFIRAESFSGIFLFFCAVSAMIVANSPFSDIYKNFWEQPFGFSFAGGFYGFSIHDWINDVLMSIFFLMVGLEIKRELLFGDLSGFQKAAFPVIGAVGGMIVPGVIYYVLNMNTPSYHGFGIPMATDIAFALGVILLLGKRVPLALKVFLVTLAVADDLGAIVVIAVFYPSPEGLHFIYLGVAAGLLILLTGINHLGVRHLGVYIGIGILLWFCVHHSGIHATIAAVALAFCIPVKPKIESKEFIQVVQQMIEIFESKDKERKNILLDTQQMSAIDEAGRDFAKVQNPLLRLEHALQPLCAFIIMPLFAFANAGVDIRAEVNFHIDHIMLGVILGLVVGKPLGILSLTFLCEKCKIASRPAGVSWSHIFGAGMLAGIGFTMSMFVSNLAFDAPQASDVSKIAILLASSIAGIVGSLYLIINYKINSRAKVKS.

The next 11 membrane-spanning stretches (helical) occupy residues 21–41 (FSGI…NSPF), 64–84 (FSIH…MVGL), 102–122 (AFPV…YYVL), 131–151 (GFGI…LLLG), 160–180 (VFLV…IAVF), 185–205 (EGLH…LTGI), 212–232 (HLGV…HSGI), 307–327 (ALQP…NAGV), 342–362 (LGVI…LTFL), 377–397 (WSHI…SMFV), and 413–433 (IAIL…LIIN).

The protein belongs to the NhaA Na(+)/H(+) (TC 2.A.33) antiporter family.

The protein localises to the cell inner membrane. It carries out the reaction Na(+)(in) + 2 H(+)(out) = Na(+)(out) + 2 H(+)(in). Na(+)/H(+) antiporter that extrudes sodium in exchange for external protons. This chain is Na(+)/H(+) antiporter NhaA 2, found in Helicobacter hepaticus (strain ATCC 51449 / 3B1).